Reading from the N-terminus, the 212-residue chain is MTQEVLEAVKEAKEQSKPRNFTQSVDMIVNIRDLDVKKPENRFNEEVTLPNGRGKEVKIGVIADGELIVQAKDAGVALVINKADLEELGKDRKAAKKAANSVDFFIAQADMMPLVGRFLGPILGPRNKMPKPVPASIKLDPLLERLQSTVKVGIKQQPAIQIIVGSQDMSDEDLAENIETVLTVLDRHLDKGRNQIKSMFIKTTMGPIVRVI.

This sequence belongs to the universal ribosomal protein uL1 family. Part of the 50S ribosomal subunit.

Its function is as follows. Binds directly to 23S rRNA. Probably involved in E site tRNA release. Protein L1 is also a translational repressor protein, it controls the translation of its operon by binding to its mRNA. This is Large ribosomal subunit protein uL1 from Methanobrevibacter smithii (strain ATCC 35061 / DSM 861 / OCM 144 / PS).